The chain runs to 289 residues: Cysteine-rich venom protein Mr30 (289 aa).

Positions 1 to 24 (MLSTMQTVGAILMLSIVFVAGTKR) are cleaved as a signal peptide. At Glu33 the chain carries 4-carboxyglutamate. In terms of domain architecture, SCP spans 62 to 184 (VRMHNVIRAT…GEDRYFVCNY (123 aa)).

Belongs to the CRISP family. Post-translationally, contains 11 disulfide bonds. In terms of tissue distribution, expressed by the venom duct.

The protein resides in the secreted. Its function is as follows. Has no proteolytic activity. The polypeptide is Cysteine-rich venom protein Mr30 (Conus marmoreus (Marble cone)).